A 263-amino-acid chain; its full sequence is Type-2Ba cytolytic delta-endotoxin (263 aa).

The protein belongs to the cyt1/cyt2 endotoxin family. Post-translationally, active after proteolytic processing.

Kills the larvae of dipteran insects by making pores in the epithelial cell membrane of the insect midgut. This Bacillus thuringiensis subsp. israelensis protein is Type-2Ba cytolytic delta-endotoxin (cyt2Ba1).